Here is a 179-residue protein sequence, read N- to C-terminus: Guanosine-3',5'-bis(diphosphate) 3'-pyrophosphohydrolase MESH1 (179 aa).

An HD domain is found at 32-127 (YINHPLGVAR…VKLADKLYNL (96 aa)). Positions 35, 61, and 62 each coordinate Mn(2+). Residues glutamate 65 and aspartate 66 each act as nucleophile in the active site. Residue aspartate 122 coordinates Mn(2+).

Belongs to the MESH1 family. It depends on Mn(2+) as a cofactor.

It catalyses the reaction guanosine 3',5'-bis(diphosphate) + H2O = GDP + diphosphate + H(+). Its function is as follows. ppGpp hydrolyzing enzyme involved in starvation response. The sequence is that of Guanosine-3',5'-bis(diphosphate) 3'-pyrophosphohydrolase MESH1 (hddc3) from Xenopus tropicalis (Western clawed frog).